A 305-amino-acid chain; its full sequence is UDP-3-O-acyl-N-acetylglucosamine deacetylase (305 aa).

Positions 78, 237, and 241 each coordinate Zn(2+). H264 acts as the Proton donor in catalysis.

It belongs to the LpxC family. Requires Zn(2+) as cofactor.

The enzyme catalyses a UDP-3-O-[(3R)-3-hydroxyacyl]-N-acetyl-alpha-D-glucosamine + H2O = a UDP-3-O-[(3R)-3-hydroxyacyl]-alpha-D-glucosamine + acetate. The protein operates within glycolipid biosynthesis; lipid IV(A) biosynthesis; lipid IV(A) from (3R)-3-hydroxytetradecanoyl-[acyl-carrier-protein] and UDP-N-acetyl-alpha-D-glucosamine: step 2/6. Catalyzes the hydrolysis of UDP-3-O-myristoyl-N-acetylglucosamine to form UDP-3-O-myristoylglucosamine and acetate, the committed step in lipid A biosynthesis. The chain is UDP-3-O-acyl-N-acetylglucosamine deacetylase from Burkholderia multivorans (strain ATCC 17616 / 249).